A 220-amino-acid chain; its full sequence is UPF0319 protein YccT (220 aa).

Residues 1 to 20 (MKTGIVTTLIALCLPVSVFA) form the signal peptide.

The protein belongs to the UPF0319 family.

The sequence is that of UPF0319 protein YccT from Escherichia coli O139:H28 (strain E24377A / ETEC).